We begin with the raw amino-acid sequence, 251 residues long: Protein FAM216A (251 aa).

Residues M1–A41 are disordered.

It belongs to the FAM216 family.

This chain is Protein FAM216A (Fam216a), found in Mus musculus (Mouse).